Reading from the N-terminus, the 341-residue chain is MVDLLTGLLPPFVWRLLIIVLQIVAIVLPLLIAVAYLTYAERKVIGAMQLRKGPNVVGPFGLLQPMADGLKLFVKETVLPTSANRVVFVGAPMLTFFLALVAWAVIPFDKGWVLADINVGVLYLFAISSLGVYGIIMAGWASNSKYAFLGGLRSAAQMVSYEVSIGFILISVLLTVGSLNLSDVVTAQSKMWFIVPHFPLFILFIISGLAETNRAPFDLPEAEAELVAGYNVEYSAMTFALFFLGEYANMLMMGAMTSILFLGGWMAPFGLGWLPIPGLIWFVLKICLVMFVFLWVRATFPRYRYDQLMRLGWKVFLPFSLFWLVLTASVLTAFGWLPNQG.

8 helical membrane passes run 16–36, 86–106, 119–139, 165–185, 191–211, 254–274, 276–296, and 315–335; these read LLIIVLQIVAIVLPLLIAVAY, VVFVGAPMLTFFLALVAWAVI, VGVLYLFAISSLGVYGIIMAG, IGFILISVLLTVGSLNLSDVV, MWFIVPHFPLFILFIISGLAE, GAMTSILFLGGWMAPFGLGWL, IPGLIWFVLKICLVMFVFLWV, and VFLPFSLFWLVLTASVLTAFG.

Belongs to the complex I subunit 1 family. In terms of assembly, NDH-1 is composed of 14 different subunits. Subunits NuoA, H, J, K, L, M, N constitute the membrane sector of the complex.

The protein resides in the cell inner membrane. The enzyme catalyses a quinone + NADH + 5 H(+)(in) = a quinol + NAD(+) + 4 H(+)(out). In terms of biological role, NDH-1 shuttles electrons from NADH, via FMN and iron-sulfur (Fe-S) centers, to quinones in the respiratory chain. The immediate electron acceptor for the enzyme in this species is believed to be ubiquinone. Couples the redox reaction to proton translocation (for every two electrons transferred, four hydrogen ions are translocated across the cytoplasmic membrane), and thus conserves the redox energy in a proton gradient. This subunit may bind ubiquinone. This Paramagnetospirillum magneticum (strain ATCC 700264 / AMB-1) (Magnetospirillum magneticum) protein is NADH-quinone oxidoreductase subunit H.